We begin with the raw amino-acid sequence, 191 residues long: Probable chemoreceptor glutamine deamidase CheD (191 aa).

This sequence belongs to the CheD family.

The catalysed reaction is L-glutaminyl-[protein] + H2O = L-glutamyl-[protein] + NH4(+). In terms of biological role, probably deamidates glutamine residues to glutamate on methyl-accepting chemotaxis receptors (MCPs), playing an important role in chemotaxis. The chain is Probable chemoreceptor glutamine deamidase CheD from Hydrogenovibrio crunogenus (strain DSM 25203 / XCL-2) (Thiomicrospira crunogena).